The primary structure comprises 103 residues: Small ubiquitin-related modifier 2 (103 aa).

Positions 15–92 (AHINLKVKGQ…IDAMLHQTGG (78 aa)) constitute a Ubiquitin-like domain. A Glycyl lysine isopeptide (Gly-Lys) (interchain with K-? in acceptor proteins) cross-link involves residue glycine 92.

This sequence belongs to the ubiquitin family. SUMO subfamily. Interacts with SAE2, SCE1, SIZ1 and MMS21. Interacts with HSFA2. Covalently attached to ABI5, FLD, GTE3, HSFA2 and ICE1.

Its subcellular location is the nucleus. The protein resides in the cytoplasm. In terms of biological role, ubiquitin-like protein which can be covalently attached to target lysines as a monomer. Does not seem to be involved in protein degradation and may function as an antagonist of ubiquitin in the degradation process. Required for the massive protein sumoylation in the nucleus induced by heat shock and controlled by SIZ1. The protein is Small ubiquitin-related modifier 2 of Arabidopsis thaliana (Mouse-ear cress).